A 412-amino-acid polypeptide reads, in one-letter code: Imidazolonepropionase (412 aa).

Fe(3+) is bound by residues histidine 76 and histidine 78. Histidine 76 and histidine 78 together coordinate Zn(2+). 3 residues coordinate 4-imidazolone-5-propanoate: arginine 85, tyrosine 148, and histidine 181. Residue tyrosine 148 coordinates N-formimidoyl-L-glutamate. Residue histidine 242 coordinates Fe(3+). Residue histidine 242 coordinates Zn(2+). Glutamate 245 contributes to the 4-imidazolone-5-propanoate binding site. A Fe(3+)-binding site is contributed by aspartate 317. Aspartate 317 is a binding site for Zn(2+). N-formimidoyl-L-glutamate is bound by residues asparagine 319 and glycine 321. Residue serine 322 participates in 4-imidazolone-5-propanoate binding.

The protein belongs to the metallo-dependent hydrolases superfamily. HutI family. Zn(2+) serves as cofactor. Requires Fe(3+) as cofactor.

Its subcellular location is the cytoplasm. The enzyme catalyses 4-imidazolone-5-propanoate + H2O = N-formimidoyl-L-glutamate. Its pathway is amino-acid degradation; L-histidine degradation into L-glutamate; N-formimidoyl-L-glutamate from L-histidine: step 3/3. Catalyzes the hydrolytic cleavage of the carbon-nitrogen bond in imidazolone-5-propanoate to yield N-formimidoyl-L-glutamate. It is the third step in the universal histidine degradation pathway. This Staphylococcus aureus (strain MSSA476) protein is Imidazolonepropionase.